The primary structure comprises 292 residues: Bifunctional protein FolD (292 aa).

Residues 165–167, Ser190, and Thr231 contribute to the NADP(+) site; that span reads GRS.

It belongs to the tetrahydrofolate dehydrogenase/cyclohydrolase family. Homodimer.

The enzyme catalyses (6R)-5,10-methylene-5,6,7,8-tetrahydrofolate + NADP(+) = (6R)-5,10-methenyltetrahydrofolate + NADPH. The catalysed reaction is (6R)-5,10-methenyltetrahydrofolate + H2O = (6R)-10-formyltetrahydrofolate + H(+). Its pathway is one-carbon metabolism; tetrahydrofolate interconversion. In terms of biological role, catalyzes the oxidation of 5,10-methylenetetrahydrofolate to 5,10-methenyltetrahydrofolate and then the hydrolysis of 5,10-methenyltetrahydrofolate to 10-formyltetrahydrofolate. This Arthrobacter globiformis protein is Bifunctional protein FolD.